Reading from the N-terminus, the 209-residue chain is Octanoyltransferase (209 aa).

One can recognise a BPL/LPL catalytic domain in the interval 30 to 209; the sequence is VNEPEIVYLV…IQTEFNKIFT (180 aa). Residues 69–76, 143–145, and 156–158 each bind substrate; these read RGGKFTFH, AIG, and GVA. The active-site Acyl-thioester intermediate is C174.

It belongs to the LipB family.

It localises to the cytoplasm. The catalysed reaction is octanoyl-[ACP] + L-lysyl-[protein] = N(6)-octanoyl-L-lysyl-[protein] + holo-[ACP] + H(+). It functions in the pathway protein modification; protein lipoylation via endogenous pathway; protein N(6)-(lipoyl)lysine from octanoyl-[acyl-carrier-protein]: step 1/2. Functionally, catalyzes the transfer of endogenously produced octanoic acid from octanoyl-acyl-carrier-protein onto the lipoyl domains of lipoate-dependent enzymes. Lipoyl-ACP can also act as a substrate although octanoyl-ACP is likely to be the physiological substrate. The chain is Octanoyltransferase from Rickettsia canadensis (strain McKiel).